The primary structure comprises 73 residues: Pelophylaxin-1 (73 aa).

An N-terminal signal peptide occupies residues Met1–Cys22. Positions Glu23–Ile41 are excised as a propeptide. Residues Cys67 and Cys73 are joined by a disulfide bond.

As to expression, expressed by the skin glands.

The protein resides in the secreted. Functionally, antimicrobial peptide. The polypeptide is Pelophylaxin-1 (Pelophylax fukienensis (Fukien gold-striped pond frog)).